The primary structure comprises 607 residues: Nexilin (607 aa).

The span at 1-14 (MNDVSQKAEIKEML) shows a compositional bias: basic and acidic residues. Disordered stretches follow at residues 1-143 (MNDV…EDKM) and 165-268 (ETEA…RRRI). Phosphoserine is present on Ser-16. Basic and acidic residues-rich tracts occupy residues 40-85 (GKFD…RAEQ), 120-143 (KTKDPEDLDREEGNGRTNHEEDKM), 167-221 (EAKK…HMVN), and 228-268 (DRET…RRRI). At Ser-172 the chain carries Phosphoserine. A phosphoserine mark is found at Ser-281, Ser-288, and Ser-296. Phosphothreonine is present on Thr-301. Disordered stretches follow at residues 419 to 444 (NFHEDDDVDVRPAKKSESPFTHKVNM) and 480 to 514 (AALQKKREDEEEEEGSIVNGSTTEDEEQTRSGAPW). A phosphoserine mark is found at Ser-495 and Ser-500. Thr-502 is modified (phosphothreonine). Residues 513–601 (PWFKKPLRNT…GSAASTCILT (89 aa)) enclose the Ig-like domain.

In terms of assembly, interacts with F-actin.

The protein localises to the cytoplasm. The protein resides in the cytoskeleton. Its subcellular location is the cell junction. It is found in the adherens junction. It localises to the myofibril. The protein localises to the sarcomere. The protein resides in the z line. Functionally, involved in regulating cell migration through association with the actin cytoskeleton. Has an essential role in the maintenance of Z line and sarcomere integrity. The sequence is that of Nexilin from Mus musculus (Mouse).